The chain runs to 538 residues: Cytochrome P450 18a1 (538 aa).

The chain crosses the membrane as a helical span at residues 24–44 (QHLLMVFLGLLALVTLLQWLV). Heme is bound at residue cysteine 466.

It belongs to the cytochrome P450 family. Heme serves as cofactor. In terms of tissue distribution, expressed in body wall (epidermal and muscle cells) and mid- and hind-gut.

It is found in the endoplasmic reticulum membrane. The protein localises to the microsome membrane. Probably involved in steroid hormones biosynthesis. This is Cytochrome P450 18a1 (Cyp18a1) from Drosophila melanogaster (Fruit fly).